A 446-amino-acid chain; its full sequence is Probable glucan endo-1,3-beta-glucosidase eglC (446 aa).

The first 18 residues, 1–18 (MQFTHLVALALALATSEA), serve as a signal peptide directing secretion. The Proton donor role is filled by E128. The N-linked (GlcNAc...) asparagine glycan is linked to N183. The active-site Nucleophile is E239. 2 N-linked (GlcNAc...) asparagine glycosylation sites follow: N364 and N370. The tract at residues 393 to 416 (SSGAGASGASGQSSSSTGSSSAPS) is disordered. Residues 401–416 (ASGQSSSSTGSSSAPS) show a composition bias toward low complexity. The GPI-anchor amidated asparagine moiety is linked to residue N423. Residues 424-446 (AASGLSGSIFGAVVAVCLALAAL) constitute a propeptide, removed in mature form.

It belongs to the glycosyl hydrolase 17 family. The GPI-anchor is attached to the protein in the endoplasmic reticulum and serves to target the protein to the cell surface. There, the glucosamine-inositol phospholipid moiety is cleaved off and the GPI-modified mannoprotein is covalently attached via its lipidless GPI glycan remnant to the 1,6-beta-glucan of the outer cell wall layer.

The protein localises to the cell membrane. The protein resides in the secreted. Its subcellular location is the cell wall. It carries out the reaction Hydrolysis of (1-&gt;3)-beta-D-glucosidic linkages in (1-&gt;3)-beta-D-glucans.. In terms of biological role, glucanases play a role in cell expansion during growth, in cell-cell fusion during mating, and in spore release during sporulation. This enzyme may be involved in beta-glucan degradation and also function biosynthetically as a transglycosylase. The protein is Probable glucan endo-1,3-beta-glucosidase eglC (eglC) of Aspergillus fumigatus (strain ATCC MYA-4609 / CBS 101355 / FGSC A1100 / Af293) (Neosartorya fumigata).